The primary structure comprises 578 residues: Vesicular acetylcholine transporter (578 aa).

Residues Met-1–Arg-32 lie on the Cytoplasmic side of the membrane. The chain crosses the membrane as a helical span at residues Leu-33 to Val-53. At Pro-54–Gly-98 the chain is on the lumenal, vesicle side. The N-linked (GlcNAc...) asparagine glycan is linked to Asn-78. The chain crosses the membrane as a helical span at residues Ile-99 to Ile-119. At Asp-120–Asp-125 the chain is on the cytoplasmic side. Residues Leu-126–Ser-146 traverse the membrane as a helical segment. The Lumenal, vesicle portion of the chain corresponds to Ser-147–Ala-154. The chain crosses the membrane as a helical span at residues Arg-155 to Asp-175. Topologically, residues Arg-176–Leu-187 are cytoplasmic. The chain crosses the membrane as a helical span at residues Gly-188–Leu-208. The Lumenal, vesicle portion of the chain corresponds to Tyr-209–Glu-215. Residues Val-216 to Met-236 traverse the membrane as a helical segment. At Lys-237–Pro-263 the chain is on the cytoplasmic side. Residues Tyr-264–Pro-284 form a helical membrane-spanning segment. At Thr-285–Trp-299 the chain is on the lumenal, vesicle side. The N-linked (GlcNAc...) asparagine glycan is linked to Asn-293. A helical membrane pass occupies residues Lys-300–Val-320. Residues Lys-321–Gln-330 are Cytoplasmic-facing. Residues Trp-331–Cys-351 traverse the membrane as a helical segment. Residues Ser-352–Lys-355 lie on the Lumenal, vesicle side of the membrane. Residues Met-356 to Leu-376 traverse the membrane as a helical segment. Topologically, residues Pro-377–Tyr-387 are cytoplasmic. The chain crosses the membrane as a helical span at residues Val-388–Val-408. The Lumenal, vesicle portion of the chain corresponds to Gly-409–Ala-413. The helical transmembrane segment at Gly-414 to Leu-434 threads the bilayer. At Ala-435–Phe-578 the chain is on the cytoplasmic side. Composition is skewed to low complexity over residues Glu-507–Gly-534 and Gln-549–Gln-563. The interval Glu-507–Phe-578 is disordered.

Belongs to the major facilitator superfamily. Vesicular transporter family.

It is found in the membrane. Functionally, involved in acetylcholine transport into synaptic vesicles. The chain is Vesicular acetylcholine transporter (VAChT) from Drosophila melanogaster (Fruit fly).